The sequence spans 354 residues: Inactive ADP-ribosyltransferase ARH2 (354 aa).

Position 27 is a phosphoserine (serine 27).

The protein belongs to the ADP-ribosylglycohydrolase family.

It is found in the cytoplasm. The protein localises to the myofibril. Its subcellular location is the sarcomere. Required for myofibril assembly and outgrowth of the cardiac chambers in the developing heart. Appears to be catalytically inactive, showing no activity against O-acetyl-ADP-ribose. The chain is Inactive ADP-ribosyltransferase ARH2 (ADPRHL1) from Homo sapiens (Human).